The following is a 732-amino-acid chain: Protein FAR1-RELATED SEQUENCE 4 (732 aa).

Positions 11–97 (LFYKDYAKSV…VKEHNHDLLP (87 aa)) constitute an FAR1 domain. Residues 212–308 (VVSFETSYFV…CLWHVLDQLP (97 aa)) enclose the MULE domain. An SWIM-type zinc finger spans residues 490–526 (YLVDWDEFKSDIYCSCRSFEYKGYLCRHAIVVLQMSG). Residues 623-683 (QEENQYGSTS…ETVGEGSQEG (61 aa)) are disordered. The segment covering 624–635 (EENQYGSTSTQI) has biased composition (polar residues).

Belongs to the FHY3/FAR1 family. Expressed in hypocotyls, rosette and cauline leaves, inflorescences stems, flowers and siliques.

The protein resides in the nucleus. Its function is as follows. Putative transcription activator involved in regulating light control of development. The protein is Protein FAR1-RELATED SEQUENCE 4 (FRS4) of Arabidopsis thaliana (Mouse-ear cress).